A 336-amino-acid polypeptide reads, in one-letter code: Dihydroorotate dehydrogenase (quinone) (336 aa).

FMN contacts are provided by residues 62-66 (AGLDK) and Thr-86. Lys-66 provides a ligand contact to substrate. Residue 111–115 (NRMGF) participates in substrate binding. Residues Asn-139 and Asn-172 each contribute to the FMN site. Asn-172 is a binding site for substrate. Ser-175 functions as the Nucleophile in the catalytic mechanism. Residue Asn-177 coordinates substrate. FMN-binding residues include Lys-217 and Thr-245. 246–247 (NT) lines the substrate pocket. FMN contacts are provided by residues Gly-268, Gly-297, and 318–319 (YS).

The protein belongs to the dihydroorotate dehydrogenase family. Type 2 subfamily. In terms of assembly, monomer. FMN is required as a cofactor.

It localises to the cell membrane. It carries out the reaction (S)-dihydroorotate + a quinone = orotate + a quinol. Its pathway is pyrimidine metabolism; UMP biosynthesis via de novo pathway; orotate from (S)-dihydroorotate (quinone route): step 1/1. In terms of biological role, catalyzes the conversion of dihydroorotate to orotate with quinone as electron acceptor. This Cronobacter sakazakii (strain ATCC BAA-894) (Enterobacter sakazakii) protein is Dihydroorotate dehydrogenase (quinone).